The following is a 569-amino-acid chain: Formate--tetrahydrofolate ligase (569 aa).

68–75 is an ATP binding site; it reads TPAGEGKT.

Belongs to the formate--tetrahydrofolate ligase family.

It carries out the reaction (6S)-5,6,7,8-tetrahydrofolate + formate + ATP = (6R)-10-formyltetrahydrofolate + ADP + phosphate. It functions in the pathway one-carbon metabolism; tetrahydrofolate interconversion. This is Formate--tetrahydrofolate ligase from Psychrobacter sp. (strain PRwf-1).